A 260-amino-acid chain; its full sequence is Dolichol-phosphate mannosyltransferase subunit 1 (260 aa).

The disordered stretch occupies residues 1 to 25 (MASTGASRSLAASPRPPQGRSSRQD). A2 is modified (N-acetylalanine). S3 and S9 each carry phosphoserine. P32, Y34, E36, I63, D65, D118, A119, D120, R147, R234, and K240 together coordinate GDP-alpha-D-mannose. A Mg(2+)-binding site is contributed by D120. Residue D120 coordinates Mn(2+).

Belongs to the glycosyltransferase 2 family. Component of the dolichol-phosphate mannose (DPM) synthase complex composed of DPM1, DPM2 and DPM3; within the complex, directly interacts with DPM3. This interaction may stabilize DPM1. Requires Mg(2+) as cofactor. The cofactor is Mn(2+). Ca(2+) serves as cofactor.

It is found in the endoplasmic reticulum. It catalyses the reaction a di-trans,poly-cis-dolichyl phosphate + GDP-alpha-D-mannose = a di-trans,poly-cis-dolichyl beta-D-mannosyl phosphate + GDP. It participates in protein modification; protein glycosylation. Its function is as follows. Transfers mannose from GDP-mannose to dolichol monophosphate to form dolichol phosphate mannose (Dol-P-Man) which is the mannosyl donor in pathways leading to N-glycosylation, glycosyl phosphatidylinositol membrane anchoring, and O-mannosylation of proteins; catalytic subunit of the dolichol-phosphate mannose (DPM) synthase complex. This is Dolichol-phosphate mannosyltransferase subunit 1 (Dpm1) from Mus musculus (Mouse).